The sequence spans 407 residues: Formamidase (407 aa).

Homotrimer.

It carries out the reaction formamide + H2O = formate + NH4(+). Hydrolyzes formamide with the production of ammonia which can be used as a source of nitrogen for growth. Also acts, more slowly, on acetamide, propanamide and butanamide. The sequence is that of Formamidase (fmdA) from Methylophilus methylotrophus (Bacterium W3A1).